A 359-amino-acid polypeptide reads, in one-letter code: Heat-inducible transcription repressor HrcA (359 aa).

The protein belongs to the HrcA family.

Functionally, negative regulator of class I heat shock genes (grpE-dnaK-dnaJ and groELS operons). Prevents heat-shock induction of these operons. The chain is Heat-inducible transcription repressor HrcA from Sinorhizobium fredii (strain NBRC 101917 / NGR234).